We begin with the raw amino-acid sequence, 726 residues long: Methionine--tRNA ligase (726 aa).

Residues 12–22 (PYVNNIPHLGN) carry the 'HIGH' region motif. 4 residues coordinate Zn(2+): Cys143, Cys146, Cys155, and Cys158. Residues 330–334 (KFSKS) carry the 'KMSKS' region motif. Position 333 (Lys333) interacts with ATP. The region spanning 562–667 (FSEQICLKTV…DNPIPGERVI (106 aa)) is the tRNA-binding domain.

It belongs to the class-I aminoacyl-tRNA synthetase family. MetG type 1 subfamily. As to quaternary structure, homodimer. Zn(2+) serves as cofactor.

Its subcellular location is the cytoplasm. It carries out the reaction tRNA(Met) + L-methionine + ATP = L-methionyl-tRNA(Met) + AMP + diphosphate. Functionally, is required not only for elongation of protein synthesis but also for the initiation of all mRNA translation through initiator tRNA(fMet) aminoacylation. The protein is Methionine--tRNA ligase of Borrelia duttonii (strain Ly).